The following is a 529-amino-acid chain: Probable threonine/serine exporter (529 aa).

The next 10 helical transmembrane spans lie at 88–108, 168–188, 212–232, 234–254, 265–285, 312–332, 344–364, 365–385, 389–409, and 428–448; these read ITVTTIIVSALATTDTPPVTI, FALGVAMLLGGTWLTCVLAAV, VFGAGIATLVAVAAYLIAGQD, TALVATGIVVLLSGMTLVGSM, ALARLGDALFLTAGIVVGILI, MPLPILVAVSGAALSGVCLTI, AGLSAGLAELVLIGLGAAGFG, RVVATWTAAIGVGFLATLISI, APALVTATAGIMPMLPGLAVF, and LLEAAATALALGSGVVLGEFL. The disordered stretch occupies residues 482-501; the sequence is QPAKSQQPTGTGGQRWRSVA.

This sequence belongs to the ThrE exporter (TC 2.A.79) family.

It localises to the cell membrane. The enzyme catalyses L-threonine(in) + H(+)(out) = L-threonine(out) + H(+)(in). Catalyzes the export of L-threonine and L-serine from the cell to the extracellular environment. Export is dependent on the proton motive force. Required for in vitro growth and survival of bacteria inside macrophages. Increased expression is associated with low-level amikacin (AMK) resistance. In Mycobacterium tuberculosis (strain ATCC 25618 / H37Rv), this protein is Probable threonine/serine exporter.